The chain runs to 387 residues: Dual-specificity RNA methyltransferase RlmN (387 aa).

Glutamate 110 functions as the Proton acceptor in the catalytic mechanism. Residues 117–349 (VGKAGALCVS…NRAGYASPIR (233 aa)) form the Radical SAM core domain. The cysteines at positions 124 and 360 are disulfide-linked. Residues cysteine 131, cysteine 135, and cysteine 138 each coordinate [4Fe-4S] cluster. Residues 186-187 (GE), serine 218, 240-242 (SLH), and asparagine 317 each bind S-adenosyl-L-methionine. Cysteine 360 serves as the catalytic S-methylcysteine intermediate.

Belongs to the radical SAM superfamily. RlmN family. Requires [4Fe-4S] cluster as cofactor.

The protein localises to the cytoplasm. The catalysed reaction is adenosine(2503) in 23S rRNA + 2 reduced [2Fe-2S]-[ferredoxin] + 2 S-adenosyl-L-methionine = 2-methyladenosine(2503) in 23S rRNA + 5'-deoxyadenosine + L-methionine + 2 oxidized [2Fe-2S]-[ferredoxin] + S-adenosyl-L-homocysteine. It carries out the reaction adenosine(37) in tRNA + 2 reduced [2Fe-2S]-[ferredoxin] + 2 S-adenosyl-L-methionine = 2-methyladenosine(37) in tRNA + 5'-deoxyadenosine + L-methionine + 2 oxidized [2Fe-2S]-[ferredoxin] + S-adenosyl-L-homocysteine. Specifically methylates position 2 of adenine 2503 in 23S rRNA and position 2 of adenine 37 in tRNAs. m2A2503 modification seems to play a crucial role in the proofreading step occurring at the peptidyl transferase center and thus would serve to optimize ribosomal fidelity. The chain is Dual-specificity RNA methyltransferase RlmN from Hyphomonas neptunium (strain ATCC 15444).